Here is a 218-residue protein sequence, read N- to C-terminus: MGQKVNPVGLRIGVIRDWESKWFAGKDYADFLHEDLKIREFISKRLSDASVSKVEIERAANRVNITIHTAKPGMVIGKGGSEVEALRKALNSLTGKRVHINILEIKRADLDAQLVAENIARQLENRISFRRAQKQTIQRTMRAGAQGIKTMVSGRLGGADIARSEYYSEGTVPLHTLRADIDYATAEADTTYGKLGVKVWIYRGEVLPTKKNTAEGGK.

One can recognise a KH type-2 domain in the interval 38-106 (IREFISKRLS…RVHINILEIK (69 aa)).

The protein belongs to the universal ribosomal protein uS3 family. Part of the 30S ribosomal subunit. Forms a tight complex with proteins S10 and S14.

Its function is as follows. Binds the lower part of the 30S subunit head. Binds mRNA in the 70S ribosome, positioning it for translation. This is Small ribosomal subunit protein uS3 from Bacillus pumilus (strain SAFR-032).